The primary structure comprises 339 residues: Protein FAM76B (339 aa).

Ala-2 is modified (N-acetylalanine). Phosphoserine is present on residues Ser-22 and Ser-148. The segment at 144-243 (EQRKSLGSSH…INQSADSGGT (100 aa)) is disordered. Over residues 148–160 (SLGSSHSNSSSSS) the composition is skewed to low complexity. The segment covering 167 to 189 (HHSKHHHHHHHHHHRHSSGHHKV) has biased composition (basic residues). At Ser-193 the chain carries Phosphoserine. Thr-215 carries the post-translational modification Phosphothreonine. Over residues 215 to 224 (TPKKKPKLES) the composition is skewed to basic and acidic residues. Over residues 228–243 (NGDSSSINQSADSGGT) the composition is skewed to polar residues. Residues 248-328 (LISQLKEEVM…QVAALSKGKK (81 aa)) adopt a coiled-coil conformation.

Belongs to the FAM76 family. Interacts with HNRNPA2B1 (via C-terminus); the interaction results in retention of HNRNPA2B1 in the nucleus and inhibition of the NF-kappa-B-mediated inflammatory pathway.

It localises to the nucleus speckle. Functionally, negatively regulates the NF-kappa-B-mediated inflammatory pathway by preventing the translocation of HNRNPA2B1 from the nucleus to the cytoplasm. Inhibits the PI3K/Akt/NF-kappa-B pathway-mediated polarization of M1 macrophages by binding to and stabilizing PIK3CD mRNA, resulting in increased levels of PIK3CD protein and increased levels of phosphorylated downstream target AKT which leads to decreased NF-kappa-B signaling. In Mus musculus (Mouse), this protein is Protein FAM76B (Fam76b).